We begin with the raw amino-acid sequence, 492 residues long: N-succinylglutamate 5-semialdehyde dehydrogenase (492 aa).

220-225 lines the NAD(+) pocket; it reads GSANTG. Residues E243 and C277 contribute to the active site.

It belongs to the aldehyde dehydrogenase family. AstD subfamily.

The catalysed reaction is N-succinyl-L-glutamate 5-semialdehyde + NAD(+) + H2O = N-succinyl-L-glutamate + NADH + 2 H(+). Its pathway is amino-acid degradation; L-arginine degradation via AST pathway; L-glutamate and succinate from L-arginine: step 4/5. Functionally, catalyzes the NAD-dependent reduction of succinylglutamate semialdehyde into succinylglutamate. This chain is N-succinylglutamate 5-semialdehyde dehydrogenase, found in Escherichia coli O127:H6 (strain E2348/69 / EPEC).